Reading from the N-terminus, the 538-residue chain is Prickle planar cell polarity protein 3-A (538 aa).

The PET domain maps to 66-175 (SGSQRDSLCE…CVRPVSGTMS (110 aa)). LIM zinc-binding domains follow at residues 177 to 241 (TVCQ…ELKR), 242 to 302 (PRCL…LYAQ), and 305 to 366 (DSCG…NATP). A compositionally biased stretch (polar residues) spans 369–378 (SFSPSQTDLS). 3 disordered regions span residues 369–398 (SFSPSQTDLSFQKETKDVGTSTNHELDGDS), 433–463 (RGAPKEFSRECPNRRSLPDLNSHTRTPTRVT), and 475–538 (SVSL…CLLS). Residues 435–449 (APKEFSRECPNRRSL) show a composition bias toward basic and acidic residues. Polar residues predominate over residues 451-463 (DLNSHTRTPTRVT). 2 stretches are compositionally biased toward low complexity: residues 475 to 488 (SVSLSHPSFTSSSS) and 514 to 523 (APPTHAPTST).

The protein belongs to the prickle / espinas / testin family. As to quaternary structure, interacts with vangl2 via its C-terminus. The vangl2-dependent membrane recruitment of prickle3 is a prerequisite for its polarization. Interacts with wtip. Wtip is involved in the recruitment of prickle3 to the basal body. Predominantly expressed in the epidermal ectoderm.

It localises to the cytoplasm. The protein localises to the cell membrane. The protein resides in the mitochondrion. Involved in the planar cell polarity (PCP) pathway that is essential for the polarization of epithelial cells during morphogenetic processes, including gastrulation and neurulation. PCP is maintained by two molecular modules, the global and the core modules. Proteins of the core module include the proteins Frizzled (Fz), Disheveled (Dsh), Van Gogh (Vang), Prickle (Pk), Flamingo (Fmi, Celsr) and Diego (Dgo). The core module proteins develop subcellular asymmetry, accumulating in two groups on opposite sides of epithelial cells. Distinct proximal (Vang, Pk and Fmi) and distal (Fz, Dsh, Dgo and Fmi) complexes segregate to opposite sides of the cell, where they interact with the opposite complex in the neighboring cell at or near the adherents junctions. Directional information to orient polarization with respect to the tissue axes is provided by the global module which involves Wnt proteins. Involved in the organization of the basal body. Involved in cilia growth and positioning. Required for proper assembly, stability, and function of mitochondrial membrane ATP synthase (mitochondrial complex V). The chain is Prickle planar cell polarity protein 3-A (prickle3-a) from Xenopus laevis (African clawed frog).